Reading from the N-terminus, the 384-residue chain is Sphingosine 1-phosphate receptor 3 (384 aa).

Residues 1–34 (MMINPLIYLHYNYTGKLDHRPTVGTSPGTRDPKT) are Extracellular-facing. N-linked (GlcNAc...) asparagine glycosylation occurs at asparagine 12. A helical membrane pass occupies residues 35–55 (IAFLVVCSFIILENLTVLLAI). The Cytoplasmic portion of the chain corresponds to 56-64 (WKNHRFHNR). The helical transmembrane segment at 65–85 (MYFFIGNLALCDLLASVAYLV) threads the bilayer. The Extracellular segment spans residues 86–105 (NLLLSGEKTLQLSPVLWFVR). The chain crosses the membrane as a helical span at residues 106–126 (EGSMFVTLGASIFSLLAIAIE). Topologically, residues 127-144 (RHLTMIKMRPYDASKNYR) are cytoplasmic. The helical transmembrane segment at 145–165 (VFLLIGTCWLVAVLLGALPIL) threads the bilayer. The Extracellular portion of the chain corresponds to 166–186 (GWNCLGNLPDCSTILPLYTKK). Residues 187–207 (YVAFCIIVFIVLLLAMSVLYA) traverse the membrane as a helical segment. Residues 208–235 (RIYILVKSSSQKVSKHRNSEHAMSLLRT) lie on the Cytoplasmic side of the membrane. The chain crosses the membrane as a helical span at residues 236-256 (VIIVVGVFIACWMPIFVLLLL). Residues 257–271 (DVACERPCPILYKAD) lie on the Extracellular side of the membrane. Residues 272 to 292 (WFIAVAVLNSAMNPIIYTLAS) traverse the membrane as a helical segment. The Cytoplasmic segment spans residues 293-384 (REMRRAFLGL…REGEGGNGGR (92 aa)). Composition is skewed to polar residues over residues 315-325 (NDSGNKQFQEP) and 336-347 (QTHPNQSQQSSR). Positions 315–384 (NDSGNKQFQE…REGEGGNGGR (70 aa)) are disordered. Basic and acidic residues predominate over residues 349–359 (AELDREQETGH).

It belongs to the G-protein coupled receptor 1 family.

It localises to the cell membrane. Functionally, receptor for the lysosphingolipid sphingosine 1-phosphate (S1P). The protein is Sphingosine 1-phosphate receptor 3 (s1pr3) of Takifugu rubripes (Japanese pufferfish).